Consider the following 685-residue polypeptide: E3 ubiquitin-protein ligase RNF103 (685 aa).

Transmembrane regions (helical) follow at residues 6–26, 326–346, 366–386, and 411–431; these read FFLL…EAIV, LFVL…FITQ, LLII…LDSF, and MFYS…GLLI. Acidic residues predominate over residues 526 to 543; it reads EEMSEGSQDTENDSESEN. The tract at residues 526 to 550 is disordered; sequence EEMSEGSQDTENDSESENTDTLSSE. The RING-type zinc finger occupies 621-663; that stretch reads CVVCLENFENGCLLMGLPCGHVFHQNCIVMWLAGGRHCCPVCR.

In terms of assembly, interacts with DERL1 and VCP. Highly expressed in the normal cerebellum but not in the cerebral cortex.

The protein resides in the endoplasmic reticulum membrane. It catalyses the reaction S-ubiquitinyl-[E2 ubiquitin-conjugating enzyme]-L-cysteine + [acceptor protein]-L-lysine = [E2 ubiquitin-conjugating enzyme]-L-cysteine + N(6)-ubiquitinyl-[acceptor protein]-L-lysine.. Its pathway is protein modification; protein ubiquitination. In terms of biological role, acts as an E2-dependent E3 ubiquitin-protein ligase, probably involved in the ER-associated protein degradation pathway. The polypeptide is E3 ubiquitin-protein ligase RNF103 (RNF103) (Homo sapiens (Human)).